Consider the following 170-residue polypeptide: Ribosome maturation factor RimM (170 aa).

The PRC barrel domain occupies 98–170; sequence PDEYYWVDLE…LIVVDWDPDF (73 aa).

Belongs to the RimM family. As to quaternary structure, binds ribosomal protein uS19.

The protein localises to the cytoplasm. Functionally, an accessory protein needed during the final step in the assembly of 30S ribosomal subunit, possibly for assembly of the head region. Essential for efficient processing of 16S rRNA. May be needed both before and after RbfA during the maturation of 16S rRNA. It has affinity for free ribosomal 30S subunits but not for 70S ribosomes. This Xanthomonas axonopodis pv. citri (strain 306) protein is Ribosome maturation factor RimM.